A 162-amino-acid polypeptide reads, in one-letter code: uncharacterized protein (162 aa).

A run of 3 helical transmembrane segments spans residues 7–27 (LIADYGYLAIFLMLVLGIVGL), 51–71 (LSILISFVGALLGMLISYMIG), and 134–154 (TYVAFAAIGAFLWCFVFITIG).

This sequence belongs to the DedA family.

The protein resides in the cell membrane. This is an uncharacterized protein from Bacillus subtilis (strain 168).